The sequence spans 427 residues: Chaperone SurA (427 aa).

The signal sequence occupies residues 1–13; it reads MLGVALLSGAVHA. PpiC domains are found at residues 164 to 265 and 275 to 374; these read SEEY…KLEE and RDEV…EVLG.

The protein resides in the periplasm. The catalysed reaction is [protein]-peptidylproline (omega=180) = [protein]-peptidylproline (omega=0). In terms of biological role, chaperone involved in the correct folding and assembly of outer membrane proteins. Recognizes specific patterns of aromatic residues and the orientation of their side chains, which are found more frequently in integral outer membrane proteins. May act in both early periplasmic and late outer membrane-associated steps of protein maturation. This Pseudomonas putida (strain ATCC 47054 / DSM 6125 / CFBP 8728 / NCIMB 11950 / KT2440) protein is Chaperone SurA.